A 487-amino-acid polypeptide reads, in one-letter code: METVQLRNPPRRQLKKLDEDSLTKQPEEVFDVLEKLGEGSYGSVYKAIHKETGQIVAIKQVPVESDLQEIIKEISIMQQCDSPHVVKYYGSYFKNTDLWIVMEYCGAGSVSDIIRLRNKTLTEDEIATILQSTLKGLEYLHFMRKIHRDIKAGNILLNTEGHAKLADFGVAGQLTDTMAKRNTVIGTPFWMAPEVIQEIGYNCVADIWSLGITAIEMAEGKPPYADIHPMRAIFMIPTNPPPTFRKPELWSDNFTDFVKQCLVKSPEQRATATQLLQHPFVKSAKGVSILRDLINEAMDVKLKRQESQQREVDQDDEENSEEDEMDSGTMVRAVGDEMGTVRVASTMTDGANTMIEHDDTLPSQLGTMVINTEDEEEEGTMKRRDETMQPAKPSFLEYFEQKEKENQINSFGKSVPGPLKNSSDWKIPQDGDYEFLKSWTVEDLQKRLLALDPMMEQEIEEIRQKYQSKRQPILDAIEAKKRRQQNF.

The residue at position 1 (Met-1) is an N-acetylmethionine. Thr-3 carries the phosphothreonine modification. One can recognise a Protein kinase domain in the interval 30 to 281 (FDVLEKLGEG…ATQLLQHPFV (252 aa)). ATP-binding positions include 36–44 (LGEGSYGSV) and Lys-59. Asp-149 functions as the Proton acceptor in the catalytic mechanism. Thr-183 is modified (phosphothreonine; by autocatalysis). At Ser-265 the chain carries Phosphoserine. Positions 290–310 (LRDLINEAMDVKLKRQESQQR) form a coiled coil. Residues 303–312 (KRQESQQREV) show a composition bias toward basic and acidic residues. Residues 303 to 332 (KRQESQQREVDQDDEENSEEDEMDSGTMVR) are disordered. Residues 313–326 (DQDDEENSEEDEMD) show a composition bias toward acidic residues. At Ser-320 the chain carries Phosphoserine. Residues Thr-340 and Thr-367 each carry the phosphothreonine modification. Thr-387 carries the phosphothreonine; by PKB/AKT1 modification. 2 positions are modified to phosphoserine: Ser-410 and Ser-414. A Phosphotyrosine modification is found at Tyr-433. The 48-residue stretch at 433–480 (YEFLKSWTVEDLQKRLLALDPMMEQEIEEIRQKYQSKRQPILDAIEAK) folds into the SARAH domain.

The protein belongs to the protein kinase superfamily. STE Ser/Thr protein kinase family. STE20 subfamily. In terms of assembly, homodimer; mediated via the coiled-coil region. Interacts with NORE1, which inhibits autoactivation. Interacts with and stabilizes SAV1. Interacts with RASSF1. Interacts with FOXO3. Interacts with RASSF2 (via SARAH domain). Interacts with AR, PKB/AKT1, TNNI3 and SIRT1. Interacts with DLG5 (via PDZ domain 3). Interacts with MARK3 and SCRIB in the presence of DLG5. The cofactor is Mg(2+). In terms of processing, autophosphorylated on serine and threonine residues. Phosphorylation at Thr-387 by PKB/AKT1, leads to inhibition of its: kinase activity, nuclear translocation and autophosphorylation at Thr-183. It also diminishes its cleavage by caspases and its ability to phosphorylate FOXO3. Post-translationally, proteolytically cleaved by caspase-3 during apoptosis at Asp-326 and Asp-349 resulting in a 37 kDa or a 39 kDa subunit respectively. The 39 kDa subunit is further cleaved into the 37 kDa form. Proteolytic cleavage results in kinase activation and nuclear translocation of the truncated form (MST1/N). It is less likely that cleavage at Asp-349 is a prerequisite for activation as this site is not conserved in the murine ortholog.

Its subcellular location is the cytoplasm. The protein localises to the nucleus. It catalyses the reaction L-seryl-[protein] + ATP = O-phospho-L-seryl-[protein] + ADP + H(+). The enzyme catalyses L-threonyl-[protein] + ATP = O-phospho-L-threonyl-[protein] + ADP + H(+). With respect to regulation, inhibited by the C-terminal non-catalytic region. Activated by caspase-cleavage. Full activation also requires homodimerization and autophosphorylation of Thr-183. Activated by RASSF1 which acts by preventing its dephosphorylation. Its function is as follows. Stress-activated, pro-apoptotic kinase which, following caspase-cleavage, enters the nucleus and induces chromatin condensation followed by internucleosomal DNA fragmentation. Key component of the Hippo signaling pathway which plays a pivotal role in organ size control and tumor suppression by restricting proliferation and promoting apoptosis. The core of this pathway is composed of a kinase cascade wherein STK3/MST2 and STK4/MST1, in complex with its regulatory protein SAV1, phosphorylates and activates LATS1/2 in complex with its regulatory protein MOB1, which in turn phosphorylates and inactivates YAP1 oncoprotein and WWTR1/TAZ. Phosphorylation of YAP1 by LATS2 inhibits its translocation into the nucleus to regulate cellular genes important for cell proliferation, cell death, and cell migration. STK3/MST2 and STK4/MST1 are required to repress proliferation of mature hepatocytes, to prevent activation of facultative adult liver stem cells (oval cells), and to inhibit tumor formation. Phosphorylates 'Ser-14' of histone H2B (H2BS14ph) during apoptosis. Phosphorylates FOXO3 upon oxidative stress, which results in its nuclear translocation and cell death initiation. Phosphorylates MOBKL1A, MOBKL1B and RASSF2. Phosphorylates TNNI3 (cardiac Tn-I) and alters its binding affinity to TNNC1 (cardiac Tn-C) and TNNT2 (cardiac Tn-T). Phosphorylates FOXO1 on 'Ser-212' and regulates its activation and stimulates transcription of PMAIP1 in a FOXO1-dependent manner. Phosphorylates SIRT1 and inhibits SIRT1-mediated p53/TP53 deacetylation, thereby promoting p53/TP53 dependent transcription and apoptosis upon DNA damage. Acts as an inhibitor of PKB/AKT1. Phosphorylates AR on 'Ser-650' and suppresses its activity by intersecting with PKB/AKT1 signaling and antagonizing formation of AR-chromatin complexes. The protein is Serine/threonine-protein kinase 4 (STK4) of Chlorocebus aethiops (Green monkey).